The primary structure comprises 130 residues: Small ribosomal subunit protein uS11c (130 aa).

This sequence belongs to the universal ribosomal protein uS11 family. Part of the 30S ribosomal subunit.

The protein resides in the plastid. The protein localises to the cyanelle. The sequence is that of Small ribosomal subunit protein uS11c from Cyanophora paradoxa.